Here is a 298-residue protein sequence, read N- to C-terminus: N-acetylmuramic acid 6-phosphate etherase (298 aa).

Positions 55 to 218 (IHAQVSGGGR…STGLMIKSGK (164 aa)) constitute an SIS domain. The Proton donor role is filled by E83. E114 is an active-site residue.

Belongs to the GCKR-like family. MurNAc-6-P etherase subfamily. In terms of assembly, homodimer.

It catalyses the reaction N-acetyl-D-muramate 6-phosphate + H2O = N-acetyl-D-glucosamine 6-phosphate + (R)-lactate. It functions in the pathway amino-sugar metabolism; 1,6-anhydro-N-acetylmuramate degradation. Its pathway is amino-sugar metabolism; N-acetylmuramate degradation. It participates in cell wall biogenesis; peptidoglycan recycling. Specifically catalyzes the cleavage of the D-lactyl ether substituent of MurNAc 6-phosphate, producing GlcNAc 6-phosphate and D-lactate. Together with AnmK, is also required for the utilization of anhydro-N-acetylmuramic acid (anhMurNAc) either imported from the medium or derived from its own cell wall murein, and thus plays a role in cell wall recycling. The sequence is that of N-acetylmuramic acid 6-phosphate etherase from Shigella dysenteriae serotype 1 (strain Sd197).